Here is a 251-residue protein sequence, read N- to C-terminus: MNLVSISINEDNYIWLLYNNDKNCIIVDPGEFISIHNICKKKKLTPVAIFLTHHHHDHVDGVESLKTYFNTPVYGPKETIKYGTTKIVKEGDEIFLLNKCFKVFELPGHTLGHVGFYSPPWFFCGDTLFSAGCGRLFEGSAKDMYFSIKKINSLPPNTLICAGHEYTLQNLNFAISVFPKNTILSMYKKKVEKLNFYKKPTLPSALYLERQINIFLNPYNFEFKGELKRLLLQEEWVLFKKLRDMKNNFIY.

Zn(2+)-binding residues include H53, H55, D57, H58, H109, D126, and H164.

The protein belongs to the metallo-beta-lactamase superfamily. Glyoxalase II family. In terms of assembly, monomer. It depends on Zn(2+) as a cofactor.

The catalysed reaction is an S-(2-hydroxyacyl)glutathione + H2O = a 2-hydroxy carboxylate + glutathione + H(+). The protein operates within secondary metabolite metabolism; methylglyoxal degradation; (R)-lactate from methylglyoxal: step 2/2. Thiolesterase that catalyzes the hydrolysis of S-D-lactoyl-glutathione to form glutathione and D-lactic acid. This Wigglesworthia glossinidia brevipalpis protein is Hydroxyacylglutathione hydrolase.